Here is a 215-residue protein sequence, read N- to C-terminus: Cardiolipin synthase (CMP-forming) (215 aa).

5 consecutive transmembrane segments (helical) span residues 29–49 (IPNILSMARLAGVPLFLWLIL), 60–80 (GWALLVLALSGVSDYLDGKLA), 117–137 (LWLTLVLLAREAMLLVMVGIL), 158–178 (LMYAFPLLLLSDGSGWIASLA), and 179–199 (AVFGWAFAGWGTTLYWWAGVL).

The protein belongs to the CDP-alcohol phosphatidyltransferase class-I family. A divalent metal cation is required as a cofactor.

Its subcellular location is the cell membrane. It carries out the reaction a CDP-1,2-diacyl-sn-glycerol + a 1,2-diacyl-sn-glycero-3-phospho-(1'-sn-glycerol) = a cardiolipin + CMP + H(+). Catalyzes the synthesis of cardiolipin (CL) (diphosphatidylglycerol) by specifically transferring a phosphatidyl group from CDP-diacylglycerol to phosphatidylglycerol (PG). This is Cardiolipin synthase (CMP-forming) from Streptomyces coelicolor (strain ATCC BAA-471 / A3(2) / M145).